A 506-amino-acid polypeptide reads, in one-letter code: Anaerobic nitric oxide reductase transcription regulator NorR (506 aa).

D57 is subject to 4-aspartylphosphate. The Sigma-54 factor interaction domain maps to 187–416 (MIGLSPAMTQ…LEHAIHRAVV (230 aa)). ATP is bound by residues 215 to 222 (GETGTGKE) and 278 to 287 (ADNGTLFLDE). The segment at residues 481–500 (WAASARALETDVANLHRLAK) is a DNA-binding region (H-T-H motif).

It participates in nitrogen metabolism; nitric oxide reduction. Functionally, required for the expression of anaerobic nitric oxide (NO) reductase, acts as a transcriptional activator for at least the norVW operon. Activation also requires sigma-54. This Salmonella heidelberg (strain SL476) protein is Anaerobic nitric oxide reductase transcription regulator NorR.